We begin with the raw amino-acid sequence, 491 residues long: MQNWIDNSFQAEFEQESYFGSLGENSTNPSSGGDRYPEALIIRDITGKTSAIYFDITDDILENDPHQTILLSPIENDIWTEKDVIIDTYRYINELIFCDEKSQQKQKDRTEFIKKEQLQLISNRNPDHYRNLWNQCENCFIPNYKKVLKSNMQICEECGSYFKMTSSDRIDLLIDEGTWNPLDQDMVSLDSSEFDSEAELECYEDNIKEWNEEMCQAFMRKLSKDLKEGQALERTANLIEEPWLPEYIQPEEKVEEWTKPDLDEGEESQDEERWIWELDKGEESQEIEDSEANDEDDDDAPYVERLAFYKKETGLLDAVQTGVGQLNGRPVALGVMDFRFLAGSMGCVVGEKITRLIEYATNNLLPLIILSASGGARVHEGSLSLMQMAKISAALYDYQSNKRLFYISILTSPTTGGVTASFAMLGDIIITEPGTFVAFAGPRVVQQILNETIPEEEQEAEALFEKGFFDLIVPRHLLKNVISELLNLHAL.

Residues Leu-132–Leu-491 enclose the CoA carboxyltransferase N-terminal domain. Zn(2+)-binding residues include Cys-136, Cys-139, Cys-155, and Cys-158. The C4-type zinc-finger motif lies at Cys-136 to Cys-158. Positions Glu-252–Leu-262 are enriched in basic and acidic residues. Disordered stretches follow at residues Glu-252–Arg-273 and Asp-279–Asp-298. Residues Ser-284 to Asp-298 are compositionally biased toward acidic residues.

It belongs to the AccD/PCCB family. In terms of assembly, acetyl-CoA carboxylase is a heterohexamer composed of biotin carboxyl carrier protein, biotin carboxylase and 2 subunits each of ACCase subunit alpha and ACCase plastid-coded subunit beta (accD). Zn(2+) is required as a cofactor.

The protein localises to the plastid. The catalysed reaction is N(6)-carboxybiotinyl-L-lysyl-[protein] + acetyl-CoA = N(6)-biotinyl-L-lysyl-[protein] + malonyl-CoA. The protein operates within lipid metabolism; malonyl-CoA biosynthesis; malonyl-CoA from acetyl-CoA: step 1/1. In terms of biological role, component of the acetyl coenzyme A carboxylase (ACC) complex. Biotin carboxylase (BC) catalyzes the carboxylation of biotin on its carrier protein (BCCP) and then the CO(2) group is transferred by the transcarboxylase to acetyl-CoA to form malonyl-CoA. This chain is Acetyl-coenzyme A carboxylase carboxyl transferase subunit beta, found in Cuscuta gronovii (Common dodder).